The following is a 612-amino-acid chain: Elongation factor 4 (612 aa).

A tr-type G domain is found at 11–193; it reads NHIRNFSIVA…KIVTDIPAPS (183 aa). Residues 23-28 and 140-143 each bind GTP; these read DHGKST and NKID.

This sequence belongs to the TRAFAC class translation factor GTPase superfamily. Classic translation factor GTPase family. LepA subfamily.

It localises to the cell membrane. It catalyses the reaction GTP + H2O = GDP + phosphate + H(+). Required for accurate and efficient protein synthesis under certain stress conditions. May act as a fidelity factor of the translation reaction, by catalyzing a one-codon backward translocation of tRNAs on improperly translocated ribosomes. Back-translocation proceeds from a post-translocation (POST) complex to a pre-translocation (PRE) complex, thus giving elongation factor G a second chance to translocate the tRNAs correctly. Binds to ribosomes in a GTP-dependent manner. The polypeptide is Elongation factor 4 (Lactobacillus acidophilus (strain ATCC 700396 / NCK56 / N2 / NCFM)).